A 219-amino-acid polypeptide reads, in one-letter code: Ribose-5-phosphate isomerase A (219 aa).

Substrate contacts are provided by residues 28–31, 81–84, and 94–97; these read TGST, DGAD, and KGGG. The active-site Proton acceptor is Glu-103. Residue Lys-121 coordinates substrate.

Belongs to the ribose 5-phosphate isomerase family. As to quaternary structure, homodimer.

The enzyme catalyses aldehydo-D-ribose 5-phosphate = D-ribulose 5-phosphate. It participates in carbohydrate degradation; pentose phosphate pathway; D-ribose 5-phosphate from D-ribulose 5-phosphate (non-oxidative stage): step 1/1. Its function is as follows. Catalyzes the reversible conversion of ribose-5-phosphate to ribulose 5-phosphate. The chain is Ribose-5-phosphate isomerase A from Edwardsiella ictaluri (strain 93-146).